Reading from the N-terminus, the 206-residue chain is Small ribosomal subunit protein uS4 (206 aa).

The segment at 15–46 is disordered; the sequence is MGENIWGRPKSPVNKREYGPGQHGQRRKNKLS. An S4 RNA-binding domain is found at 94–157; it reads RRLDAIVYRA…RQLAIVLEAT (64 aa).

The protein belongs to the universal ribosomal protein uS4 family. Part of the 30S ribosomal subunit. Contacts protein S5. The interaction surface between S4 and S5 is involved in control of translational fidelity.

Its function is as follows. One of the primary rRNA binding proteins, it binds directly to 16S rRNA where it nucleates assembly of the body of the 30S subunit. In terms of biological role, with S5 and S12 plays an important role in translational accuracy. This Cereibacter sphaeroides (strain ATCC 17025 / ATH 2.4.3) (Rhodobacter sphaeroides) protein is Small ribosomal subunit protein uS4.